The following is a 710-amino-acid chain: Solute carrier organic anion transporter family member 3A1 (710 aa).

The residue at position 1 (methionine 1) is an N-acetylmethionine. A disordered region spans residues 1-25 (MQAKKPGGSSGGGRSGELQGDEAQR). Over 1 to 40 (MQAKKPGGSSGGGRSGELQGDEAQRNKKKKKKVSCFSNIK) the chain is Cytoplasmic. The chain crosses the membrane as a helical span at residues 41–60 (IFLVSECALMLAQGTVGAYL). Residues 61–79 (VSVLTTLERRFNLQSADVG) are Extracellular-facing. The helical transmembrane segment at 80–100 (VIASSFEIGNLALILFVSYFG) threads the bilayer. Over 101-106 (ARGHRP) the chain is Cytoplasmic. Residues 107 to 131 (RLIGCGGIVMALGALLSALPEFLTH) traverse the membrane as a helical segment. At 132-174 (QYKYEAGEIRWGAEGRDVCAANGSGGDQGPDPDLICRSRTATN) the chain is on the extracellular side. Asparagine 153 carries N-linked (GlcNAc...) asparagine glycosylation. A helical membrane pass occupies residues 175-203 (MMYLLLIGAQVLLGIGATPVQPLGVSYID). Residues 204 to 222 (DHVRRKDSSLYIGILFTML) lie on the Cytoplasmic side of the membrane. A helical transmembrane segment spans residues 223–243 (VFGPACGFILGSFCTKIYVDA). Over 244-261 (VFIDTSNLDITPDDPRWI) the chain is Extracellular. A helical transmembrane segment spans residues 262–286 (GAWWGGFLLCGALLFFSSVLMFGFP). The Cytoplasmic portion of the chain corresponds to 287-344 (QSLPPHSDPALESEQAMLPEREYERPKPSNGVLRHPLEPDSSASCFQQLRVIPKVTKH). A helical membrane pass occupies residues 345–366 (LLSNPVFTCIILAACMEIAVVA). At 367–386 (GFAAFLGKYLEQQFNLTTSS) the chain is on the extracellular side. Asparagine 381 carries N-linked (GlcNAc...) asparagine glycosylation. A helical transmembrane segment spans residues 387–410 (ANQLLGMTAIPCACLGIFLGGLLV). Topologically, residues 411–414 (KKLS) are cytoplasmic. A helical membrane pass occupies residues 415-438 (LSALGAIRMAMLVNLVSTACYVSF). At 439 to 539 (LFLGCDTGPV…PGCQEAFLTF (101 aa)) the chain is on the extracellular side. Asparagine 457 carries N-linked (GlcNAc...) asparagine glycosylation. Residues 465–513 (LDPYSSCNKNCECQTDSFTPVCGADGITYLSACFAGCNSTNLTGCACLM) form the Kazal-like domain. 3 disulfide bridges follow: cysteine 471-cysteine 501, cysteine 477-cysteine 497, and cysteine 486-cysteine 511. N-linked (GlcNAc...) asparagine glycans are attached at residues asparagine 502, asparagine 505, and asparagine 519. Residues 540-562 (LCVMCVCSMIGAMAQTPSVIILI) traverse the membrane as a helical segment. Topologically, residues 563 to 571 (RTVSPELKS) are cytoplasmic. The helical transmembrane segment at 572 to 597 (YALGVLFLLLRLLGFIPPPLIFGAGI) threads the bilayer. Over 598 to 630 (DSTCLFWSTFCGEQGACALYDNVAYRYLYVSIA) the chain is Extracellular. The chain crosses the membrane as a helical span at residues 631-648 (IALKSFAFLLYTTTWQCL). Residues 649–705 (RKNYKRYIKNHEGGLSTSEFFASTLTLDNLGRDPVPANQTHRTKFIYNLEDHEWCEN) are Cytoplasmic-facing.

It belongs to the organo anion transporter (TC 2.A.60) family.

The protein localises to the basolateral cell membrane. It is found in the apical cell membrane. It localises to the basal cell membrane. The catalysed reaction is L-thyroxine(out) = L-thyroxine(in). It catalyses the reaction prostaglandin E1(out) = prostaglandin E1(in). The enzyme catalyses prostaglandin E2(out) = prostaglandin E2(in). It carries out the reaction prostaglandin F2alpha(out) = prostaglandin F2alpha(in). The catalysed reaction is (5Z,8Z,11Z,14Z)-eicosatetraenoate(out) = (5Z,8Z,11Z,14Z)-eicosatetraenoate(in). It catalyses the reaction taurocholate(out) = taurocholate(in). The enzyme catalyses glycocholate(out) = glycocholate(in). It carries out the reaction estrone 3-sulfate(out) = estrone 3-sulfate(in). The catalysed reaction is argipressin(out) = argipressin(in). Its function is as follows. Putative organic anion antiporter with apparent broad substrate specificity. Recognizes various substrates including thyroid hormone L-thyroxine, prostanoids such as prostaglandin E1 and E2, bile acids such as taurocholate, glycolate and glycochenodeoxycholate and peptide hormones such as L-arginine vasopressin, likely operating in a tissue-specific manner. The transport mechanism, its electrogenicity and potential tissue-specific counterions remain to be elucidated. The chain is Solute carrier organic anion transporter family member 3A1 (SLCO3A1) from Bos taurus (Bovine).